Reading from the N-terminus, the 378-residue chain is Forkhead box protein I1 (378 aa).

Disordered stretches follow at residues 1-26 (MSSF…QEPP) and 208-278 (DNGN…APCL). Positions 123 to 217 (RPPYSYSALI…DNGNFRRKRK (95 aa)) form a DNA-binding region, fork-head. A compositionally biased stretch (polar residues) spans 236–248 (SSLPVDSPKTTEP).

As to expression, expressed in kidney.

The protein resides in the nucleus. Functionally, transcriptional activator required for the development of normal hearing, sense of balance and kidney function. Required for the expression of SLC26A4/PDS, JAG1 and COCH in a subset of epithelial cells and the development of the endolymphatic system in the inner ear. Also required for the expression of SLC4A1/AE1, SLC4A9/AE4, ATP6V1B1 and the differentiation of intercalated cells in the epithelium of distal renal tubules. The protein is Forkhead box protein I1 (FOXI1) of Homo sapiens (Human).